Here is a 753-residue protein sequence, read N- to C-terminus: Signal transducer and activator of transcription 1 (753 aa).

N-acetylserine is present on Ser2. Lys114, Lys175, Lys296, Lys366, Lys525, and Lys637 each carry N6-methyllysine. The stretch at 136-317 forms a coiled coil; it reads LDKHKELDSK…LFQQLIQSSF (182 aa). The 98-residue stretch at 573 to 670 folds into the SH2 domain; sequence WNDGCIVGFI…ENPLKYLYPN (98 aa). Residue Glu657 is modified to ADP-ribosyl glutamic acid. N6-methyllysine is present on Lys665. Residue Tyr701 is modified to Phosphotyrosine; by JAK1, JAK2 or TYK2. Residue Lys703 forms a Glycyl lysine isopeptide (Lys-Gly) (interchain with G-Cter in SUMO1); alternate linkage. Lys703 is covalently cross-linked (Glycyl lysine isopeptide (Lys-Gly) (interchain with G-Cter in SUMO2); alternate). Glu705 carries the ADP-ribosyl glutamic acid modification. Residue Ser708 is modified to Phosphoserine; by IKKE. At Ser727 the chain carries Phosphoserine; by MAPK14. Thr749 is subject to Phosphothreonine.

Belongs to the transcription factor STAT family. Homodimerizes upon IFN-gamma induced phosphorylation. Heterodimer with STAT2 upon IFN-alpha/beta induced phosphorylation. The heterodimer STAT1:STAT2 forms the interferon-stimulated gene factor 3 complex (ISGF3) with IRF9. Interacts (phosphorylated at Ser-727) with PIAS1; the interaction results in release of STAT1 from its target gene. Interacts with IFNAR1. Interacts with IFNAR2. Found in a complex with NMI and CREBBP/CBP. Interacts with NMI which is required for CREBBP/CBP recruitment to the complex. Interacts with PTK2/FAK1. Interacts with SRC. Interacts with ERBB4 (phosphorylated). Interacts with PARP9 and DTX3L independently of IFN-beta or IFN-gamma-mediated STAT1 'Tyr-701' phosphorylation. Interacts with histone acetyltransferase EP300/p300 in response to INF-gamma stimulation. Independently of its phosphorylation status, interacts with OTOP1. Interacts with IFNGR1. Interacts with STAT4. In terms of assembly, (Microbial infection) Interacts with African swine fever virus (ASFV) MGF360-9L; this interaction mediates degradation of STAT1 through apoptosis. Post-translationally, phosphorylated on tyrosine and serine residues in response to a variety of cytokines/growth hormones including IFN-alpha, IFN-gamma, PDGF and EGF. Activated KIT promotes phosphorylation on tyrosine residues and subsequent translocation to the nucleus. Upon EGF stimulation, phosphorylation on Tyr-701 (lacking in beta form) by JAK1, JAK2 or TYK2 promotes dimerization and subsequent translocation to the nucleus. Growth hormone (GH) activates STAT1 signaling only via JAK2. Tyrosine phosphorylated in response to constitutively activated FGFR1, FGFR2, FGFR3 and FGFR4. Phosphorylation on Ser-727 by several kinases including MAPK14, ERK1/2 and CAMK2/CAMKII in response to IFN-gamma stimulation, is required for maximal transcriptional activity. Phosphorylated on Ser-727 by CAMK2/CAMKII in response to IFN-gamma stimulation and calcium mobilization, promoting activity. Phosphorylated by CAMK2/CAMKII in response to IFN-beta stimulation and calcium mobilization in epithelial cells, promoting activity. Phosphorylation on Ser-727 promotes sumoylation though increasing interaction with PIAS. Phosphorylation on Ser-727 by PRKCD induces apoptosis in response to DNA-damaging agents. Phosphorylated on tyrosine residues when PTK2/FAK1 is activated; most likely this is catalyzed by a SRC family kinase. Dephosphorylation on tyrosine residues by PTPN2 negatively regulates interferon-mediated signaling. Upon viral infection or IFN induction, phosphorylation on Ser-708 occurs much later than phosphorylation on Tyr-701 and is required for the binding of ISGF3 on the ISREs of a subset of IFN-stimulated genes IKBKE-dependent. Phosphorylation at Tyr-701 and Ser-708 are mutually exclusive, phosphorylation at Ser-708 requires previous dephosphorylation of Tyr-701. Phosphorylation at Thr-749 by IKBKB/IKKB promotes transcriptional activation of ARID5A and IL12B by STAT1. Phosphorylation at Thr-749 restricts interferon signaling and anti-inflammatory responses and promotes innate inflammatory responses. Sumoylated with SUMO1, SUMO2 and SUMO3. Sumoylation is enhanced by IFN-gamma-induced phosphorylation on Ser-727, and by interaction with PIAS proteins. Enhances the transactivation activity. In terms of processing, ISGylated. Post-translationally, mono-ADP-ribosylated at Glu-657 and Glu-705 by PARP14; ADP-ribosylation prevents phosphorylation at Tyr-701. However, the role of ADP-ribosylation in the prevention of phosphorylation has been called into question and the lack of phosphorylation may be due to sumoylation of Lys-703. Monomethylated at Lys-525 by SETD2; monomethylation is necessary for phosphorylation at Tyr-701, translocation into the nucleus and activation of the antiviral defense. In terms of processing, deubiquitinated by USP13; leading to STAT1 stabilization and positive regulation of type I and type II IFN signalings.

Its subcellular location is the cytoplasm. The protein localises to the nucleus. Functionally, signal transducer and transcription activator that mediates cellular responses to interferons (IFNs), cytokine KITLG/SCF and other cytokines and other growth factors. Following type I IFN (IFN-alpha and IFN-beta) binding to cell surface receptors, signaling via protein kinases leads to activation of Jak kinases (TYK2 and JAK1) and to tyrosine phosphorylation of STAT1 and STAT2. The phosphorylated STATs dimerize and associate with ISGF3G/IRF-9 to form a complex termed ISGF3 transcription factor, that enters the nucleus. ISGF3 binds to the IFN stimulated response element (ISRE) to activate the transcription of IFN-stimulated genes (ISG), which drive the cell in an antiviral state. In response to type II IFN (IFN-gamma), STAT1 is tyrosine- and serine-phosphorylated. It then forms a homodimer termed IFN-gamma-activated factor (GAF), migrates into the nucleus and binds to the IFN gamma activated sequence (GAS) to drive the expression of the target genes, inducing a cellular antiviral state. Becomes activated in response to KITLG/SCF and KIT signaling. May mediate cellular responses to activated FGFR1, FGFR2, FGFR3 and FGFR4. Following bacterial lipopolysaccharide (LPS)-induced TLR4 endocytosis, phosphorylated at Thr-749 by IKBKB which promotes binding of STAT1 to the 5'-TTTGAGGC-3' sequence in the ARID5A promoter, resulting in transcriptional activation of ARID5A and subsequent ARID5A-mediated stabilization of IL6. Phosphorylation at Thr-749 also promotes binding of STAT1 to the 5'-TTTGAGTC-3' sequence in the IL12B promoter and activation of IL12B transcription. Involved in food tolerance in small intestine: associates with the Gasdermin-D, p13 cleavage product (13 kDa GSDMD) and promotes transcription of CIITA, inducing type 1 regulatory T (Tr1) cells in upper small intestine. This chain is Signal transducer and activator of transcription 1 (STAT1), found in Sus scrofa (Pig).